The following is a 29-amino-acid chain: Cytochrome b6-f complex subunit 8 (29 aa).

A helical membrane pass occupies residues 3-23 (ITSIAWGALMVVFTFSLSLVV).

It belongs to the PetN family. The 4 large subunits of the cytochrome b6-f complex are cytochrome b6, subunit IV (17 kDa polypeptide, PetD), cytochrome f and the Rieske protein, while the 4 small subunits are PetG, PetL, PetM and PetN. The complex functions as a dimer.

Its subcellular location is the plastid membrane. In terms of biological role, component of the cytochrome b6-f complex, which mediates electron transfer between photosystem II (PSII) and photosystem I (PSI), cyclic electron flow around PSI, and state transitions. This is Cytochrome b6-f complex subunit 8 from Aneura mirabilis (Parasitic liverwort).